The following is a 337-amino-acid chain: Glutaminase-asparaginase (337 aa).

Residues A10 to Y337 enclose the Asparaginase/glutaminase domain. T20 functions as the Acyl-ester intermediate in the catalytic mechanism. Substrate-binding positions include S67 and T100–D101.

Belongs to the asparaginase 1 family. As to quaternary structure, homotetramer.

The protein resides in the periplasm. The enzyme catalyses L-glutamine + H2O = L-glutamate + NH4(+). The catalysed reaction is L-asparagine + H2O = L-aspartate + NH4(+). The sequence is that of Glutaminase-asparaginase (ansB) from Pseudomonas sp. (strain ATCC 29598 / 7A).